Reading from the N-terminus, the 666-residue chain is Putative cysteine-rich receptor-like protein kinase 31 (666 aa).

The N-terminal stretch at 1 to 23 is a signal peptide; the sequence is MCLNTLCAILCFVLTVSFGFVSA. Gnk2-homologous domains follow at residues 24 to 130 and 136 to 245; these read QKCG…NNSF and LEPT…GYKY. Residues 24 to 280 lie on the Extracellular side of the membrane; sequence QKCGESVFFR…PDGKKISTGV (257 aa). N-linked (GlcNAc...) asparagine glycosylation is found at Asn-52, Asn-62, Asn-104, Asn-127, and Asn-151. Residues 281-301 traverse the membrane as a helical segment; the sequence is IVAIVVSAVIFVVLVALGLVI. The Cytoplasmic portion of the chain corresponds to 302–666; that stretch reads WKRRQSYKTL…SASITRATPR (365 aa). Positions 339–616 constitute a Protein kinase domain; it reads FSRNNKLGQG…IFQMLTNSSI (278 aa). ATP contacts are provided by residues 345–353 and Lys-367; that span reads LGQGGFGEV. Phosphotyrosine is present on Tyr-412. Asp-464 acts as the Proton acceptor in catalysis. At Ser-468 the chain carries Phosphoserine. Thr-504 carries the post-translational modification Phosphothreonine. At Tyr-512 the chain carries Phosphotyrosine.

This sequence belongs to the protein kinase superfamily. Ser/Thr protein kinase family. CRK subfamily.

The protein localises to the membrane. The catalysed reaction is L-seryl-[protein] + ATP = O-phospho-L-seryl-[protein] + ADP + H(+). The enzyme catalyses L-threonyl-[protein] + ATP = O-phospho-L-threonyl-[protein] + ADP + H(+). This is Putative cysteine-rich receptor-like protein kinase 31 (CRK31) from Arabidopsis thaliana (Mouse-ear cress).